Consider the following 304-residue polypeptide: Ribokinase (304 aa).

Substrate contacts are provided by residues 12–14 (NVD), 41–45 (GKGAN), and Glu-142. Residues Asn-186 and 222–227 (TLGKQG) contribute to the ATP site. The K(+) site is built by Asp-248 and Thr-250. ATP is bound by residues 253-254 (GD) and Asn-279. Asp-254 contributes to the substrate binding site. The Proton acceptor role is filled by Asp-254. Positions 285, 288, 290, and 294 each coordinate K(+).

It belongs to the carbohydrate kinase PfkB family. Ribokinase subfamily. As to quaternary structure, homodimer. Mg(2+) serves as cofactor.

The protein localises to the cytoplasm. It catalyses the reaction D-ribose + ATP = D-ribose 5-phosphate + ADP + H(+). Its pathway is carbohydrate metabolism; D-ribose degradation; D-ribose 5-phosphate from beta-D-ribopyranose: step 2/2. With respect to regulation, activated by a monovalent cation that binds near, but not in, the active site. The most likely occupant of the site in vivo is potassium. Ion binding induces a conformational change that may alter substrate affinity. Catalyzes the phosphorylation of ribose at O-5 in a reaction requiring ATP and magnesium. The resulting D-ribose-5-phosphate can then be used either for sythesis of nucleotides, histidine, and tryptophan, or as a component of the pentose phosphate pathway. The protein is Ribokinase of Staphylococcus aureus (strain COL).